We begin with the raw amino-acid sequence, 652 residues long: DNA ligase (652 aa).

NAD(+)-binding positions include 29-33 (DSQYD), 78-79 (SL), and Glu107. Lys109 acts as the N6-AMP-lysine intermediate in catalysis. NAD(+) is bound by residues Arg130, Glu164, Lys278, and Lys302. Residues Cys395, Cys398, Cys413, and Cys418 each coordinate Zn(2+). A BRCT domain is found at 577 to 652 (STDAQLSGLT…IQDEDWLLNL (76 aa)).

Belongs to the NAD-dependent DNA ligase family. LigA subfamily. Mg(2+) serves as cofactor. It depends on Mn(2+) as a cofactor.

It catalyses the reaction NAD(+) + (deoxyribonucleotide)n-3'-hydroxyl + 5'-phospho-(deoxyribonucleotide)m = (deoxyribonucleotide)n+m + AMP + beta-nicotinamide D-nucleotide.. Functionally, DNA ligase that catalyzes the formation of phosphodiester linkages between 5'-phosphoryl and 3'-hydroxyl groups in double-stranded DNA using NAD as a coenzyme and as the energy source for the reaction. It is essential for DNA replication and repair of damaged DNA. This chain is DNA ligase, found in Streptococcus agalactiae serotype V (strain ATCC BAA-611 / 2603 V/R).